The following is a 1403-amino-acid chain: Centrosomal protein of 162 kDa (1403 aa).

Positions 19-44 (ELSDDSFENSNETPSQPNKDRKKKDT) are disordered. Positions 26–35 (ENSNETPSQP) are enriched in polar residues. Serine 156 and serine 159 each carry phosphoserine. Disordered regions lie at residues 171 to 235 (NVEP…EKTG), 305 to 342 (DTGEPRIEASPGHSVRSSAKDGLQENEESSKNISTTES), and 449 to 586 (NPSL…SDDS). Residues 176–189 (EGGRENESEHKELP) are compositionally biased toward basic and acidic residues. Residues 192 to 204 (YSDDFEDAEDTDE) are compositionally biased toward acidic residues. Residues 206 to 220 (LITKDEETRPKENPE) are compositionally biased toward basic and acidic residues. The segment covering 449-466 (NPSLLPQDNKANQTSRSR) has biased composition (polar residues). A Phosphoserine modification is found at serine 468. A compositionally biased stretch (basic residues) spans 481-496 (PCKKARSAPPLPRRKP). The span at 504-517 (ARSSGYSKPSSPLQ) shows a compositional bias: polar residues. Basic and acidic residues-rich tracts occupy residues 522–532 (LEKKTSKDNTK) and 567–581 (PHREGSPATPKRPED). 3 coiled-coil regions span residues 610 to 1120 (KRAQ…MLSR), 1170 to 1205 (EVLEENYRLRSELEGLTLEREKLKMESEAAVCQLES), and 1234 to 1385 (CQNA…LHRQ).

This sequence belongs to the CEP162 family. Interacts with alpha-tubulin. Interacts with CPNE4. Interacts with CEP290.

It localises to the cytoplasm. The protein localises to the cytoskeleton. It is found in the microtubule organizing center. The protein resides in the centrosome. Its subcellular location is the centriole. It localises to the spindle. The protein localises to the nucleus. Required to promote assembly of the transition zone in primary cilia. Acts by specifically recognizing and binding the axonemal microtubule. Localizes to the distal ends of centrioles before ciliogenesis and directly binds to axonemal microtubule, thereby promoting and restricting transition zone formation specifically at the cilia base. Required to mediate CEP290 association with microtubules. The sequence is that of Centrosomal protein of 162 kDa (Cep162) from Rattus norvegicus (Rat).